A 949-amino-acid polypeptide reads, in one-letter code: Bifunctional uridylyltransferase/uridylyl-removing enzyme (949 aa).

The segment at 1-37 is disordered; that stretch reads MKETSFWGETPSLSFADDTDKPLSDRTASPPCDPASS. Positions 1–395 are uridylyltransferase; sequence MKETSFWGET…TTGEPPKVVP (395 aa). Positions 396–756 are uridylyl-removing; sequence GPEEFQTIAG…AYPIPERGVT (361 aa). The region spanning 516-632 is the HD domain; that stretch reads VDEHIVEAVR…LDLADTIQSP (117 aa). ACT domains are found at residues 757–834 and 870–949; these read ELTV…LDIR and VIEV…TPAS.

It belongs to the GlnD family. Requires Mg(2+) as cofactor.

The enzyme catalyses [protein-PII]-L-tyrosine + UTP = [protein-PII]-uridylyl-L-tyrosine + diphosphate. It carries out the reaction [protein-PII]-uridylyl-L-tyrosine + H2O = [protein-PII]-L-tyrosine + UMP + H(+). With respect to regulation, uridylyltransferase (UTase) activity is inhibited by glutamine, while glutamine activates uridylyl-removing (UR) activity. Its function is as follows. Modifies, by uridylylation and deuridylylation, the PII regulatory proteins (GlnB and homologs), in response to the nitrogen status of the cell that GlnD senses through the glutamine level. Under low glutamine levels, catalyzes the conversion of the PII proteins and UTP to PII-UMP and PPi, while under higher glutamine levels, GlnD hydrolyzes PII-UMP to PII and UMP (deuridylylation). Thus, controls uridylylation state and activity of the PII proteins, and plays an important role in the regulation of nitrogen assimilation and metabolism. This chain is Bifunctional uridylyltransferase/uridylyl-removing enzyme, found in Gluconobacter oxydans (strain 621H) (Gluconobacter suboxydans).